A 584-amino-acid polypeptide reads, in one-letter code: Arginine--tRNA ligase (584 aa).

Positions 127–137 (PNLAKEMHVGH) match the 'HIGH' region motif.

It belongs to the class-I aminoacyl-tRNA synthetase family. Monomer.

It localises to the cytoplasm. The catalysed reaction is tRNA(Arg) + L-arginine + ATP = L-arginyl-tRNA(Arg) + AMP + diphosphate. This chain is Arginine--tRNA ligase, found in Alcanivorax borkumensis (strain ATCC 700651 / DSM 11573 / NCIMB 13689 / SK2).